The chain runs to 54 residues: UPF0391 membrane protein Oant_1245 (54 aa).

Helical transmembrane passes span 5–25 (ALVF…GIAG) and 29–48 (GIAQ…SLIA).

It belongs to the UPF0391 family.

It localises to the cell membrane. This chain is UPF0391 membrane protein Oant_1245, found in Brucella anthropi (strain ATCC 49188 / DSM 6882 / CCUG 24695 / JCM 21032 / LMG 3331 / NBRC 15819 / NCTC 12168 / Alc 37) (Ochrobactrum anthropi).